A 78-amino-acid polypeptide reads, in one-letter code: Nucleocapsid VP1 (78 aa).

In terms of assembly, homodimer.

The protein localises to the virion. Functionally, completely wraps the viral circular dsDNA genome to form a nucleoprotein filament. These interactions between the viral genome and the nucleocapsid proteins probably maintain the DNA in A-form. This certainly protects the viral DNA under conditions such as the extreme desiccation of its host. This Sulfolobus (SPV1) protein is Nucleocapsid VP1.